Consider the following 206-residue polypeptide: MHTHYEEPLWQHYEFICGIDEVGRGPLAGPVVAAAVVFPRWFQPTEALLTLLNDSKKLSAKERESLVPAIKAQALHWALAEVQHNVIDEVNILQATMLAMNNAVKALPIIPSLLLVDGNRFTTDLAIPYKTIVKGDSHVFSIAAASVLAKVHRDALMCVYATHYPHYGFERHAGYPTSAHIEAIRQHGRCPIHRQSFKLRQLGEKV.

An RNase H type-2 domain is found at 14–206; sequence EFICGIDEVG…FKLRQLGEKV (193 aa). A divalent metal cation contacts are provided by Asp-20, Glu-21, and Asp-117.

Belongs to the RNase HII family. Mn(2+) is required as a cofactor. Requires Mg(2+) as cofactor.

It localises to the cytoplasm. It catalyses the reaction Endonucleolytic cleavage to 5'-phosphomonoester.. Functionally, endonuclease that specifically degrades the RNA of RNA-DNA hybrids. The protein is Ribonuclease HII of Chlorobium chlorochromatii (strain CaD3).